The following is a 640-amino-acid chain: Threonine--tRNA ligase (640 aa).

In terms of domain architecture, TGS spans 1 to 61 (MPVITLPDGS…SNDATLQIIT (61 aa)). Positions 242-533 (DHRKIGKQLD…LIEHYAGVFP (292 aa)) are catalytic. Zn(2+) is bound by residues C333, H384, and H510.

It belongs to the class-II aminoacyl-tRNA synthetase family. As to quaternary structure, homodimer. It depends on Zn(2+) as a cofactor.

The protein localises to the cytoplasm. It carries out the reaction tRNA(Thr) + L-threonine + ATP = L-threonyl-tRNA(Thr) + AMP + diphosphate + H(+). In terms of biological role, catalyzes the attachment of threonine to tRNA(Thr) in a two-step reaction: L-threonine is first activated by ATP to form Thr-AMP and then transferred to the acceptor end of tRNA(Thr). Also edits incorrectly charged L-seryl-tRNA(Thr). This chain is Threonine--tRNA ligase, found in Pseudomonas putida (strain ATCC 700007 / DSM 6899 / JCM 31910 / BCRC 17059 / LMG 24140 / F1).